Here is a 495-residue protein sequence, read N- to C-terminus: Glutamate--tRNA ligase (495 aa).

The 'HIGH' region motif lies at 13–23; it reads PSPTGTPHVGL. The 'KMSKS' region signature appears at 257-261; the sequence is KLSKR. Lysine 260 is an ATP binding site.

The protein belongs to the class-I aminoacyl-tRNA synthetase family. Glutamate--tRNA ligase type 1 subfamily. Monomer.

The protein localises to the cytoplasm. The catalysed reaction is tRNA(Glu) + L-glutamate + ATP = L-glutamyl-tRNA(Glu) + AMP + diphosphate. Catalyzes the attachment of glutamate to tRNA(Glu) in a two-step reaction: glutamate is first activated by ATP to form Glu-AMP and then transferred to the acceptor end of tRNA(Glu). This is Glutamate--tRNA ligase from Mycolicibacterium vanbaalenii (strain DSM 7251 / JCM 13017 / BCRC 16820 / KCTC 9966 / NRRL B-24157 / PYR-1) (Mycobacterium vanbaalenii).